The following is a 41-amino-acid chain: Large ribosomal subunit protein bL36B (41 aa).

It belongs to the bacterial ribosomal protein bL36 family.

In Neisseria meningitidis serogroup C (strain 053442), this protein is Large ribosomal subunit protein bL36B.